The primary structure comprises 595 residues: Sialic acid-binding Ig-like lectin 12 (595 aa).

Residues 1-18 form the signal peptide; it reads MLLLLLLLPPLLCGRVGA. 2 Ig-like V-type domains span residues 19–142 and 143–269; these read KEQK…VNVT and ASQD…VHVT. At 19–481 the chain is on the extracellular side; that stretch reads KEQKDYLLTM…RPISGVTLGA (463 aa). A disulfide bridge connects residues C44 and C104. 4 N-linked (GlcNAc...) asparagine glycosylation sites follow: N140, N179, N230, and N290. 3 disulfides stabilise this stretch: C166–C299, C171–C231, and C293–C342. An Ig-like C2-type 1 domain is found at 275-358; the sequence is PTFSIPGTLE…AGVTMTRAVR (84 aa). Residues N360, N367, and N385 are each glycosylated (N-linked (GlcNAc...) asparagine). The Ig-like C2-type 2 domain occupies 365-462; the sequence is PQNLTMTVFQ…GSQHISLSLS (98 aa). The cysteines at positions 401 and 446 are disulfide-linked. A helical membrane pass occupies residues 482 to 502; that stretch reads FGGAGATALVFLYFCIIFVVV. The Cytoplasmic portion of the chain corresponds to 503–595; sequence RSCRKKSARP…YEYSEINIPK (93 aa). The disordered stretch occupies residues 512–560; that stretch reads PAVGVGDTGMEDANAVRGSASQGPLIESPADDSPPHHAPPALATPSPEE. Positions 563 to 568 match the ITIM motif motif; that stretch reads IQYASL. Phosphotyrosine occurs at positions 565 and 588. The SLAM-like motif signature appears at 586–591; sequence YEYSEI.

Belongs to the immunoglobulin superfamily. SIGLEC (sialic acid binding Ig-like lectin) family. Isoform Short is highly expressed in spleen, small intestine and adrenal gland; it is lower expressed in thyroid, placenta, brain, stomach, bone marrow, spinal cord and breast. Isoform Long is highly expressed in spleen, small intestine and bone marrow; it is lower expressed in thyroid, placenta, thymus, trachea, stomach, lung, adrenal gland, fetal brain and testis.

It is found in the membrane. Its function is as follows. Putative adhesion molecule that mediates sialic-acid dependent binding to cells. The sialic acid recognition site may be masked by cis interactions with sialic acids on the same cell surface. The sequence is that of Sialic acid-binding Ig-like lectin 12 (SIGLEC12) from Homo sapiens (Human).